A 365-amino-acid chain; its full sequence is MNVIDLFKKLLSFKSVTPDDDGGMEFIKEYLKGFEVIESEKEGVKNLFIYKKFGEGDHLCFGGHIDVVPPGEGWNTDPFTPTEKEGFIYARGAQDMKSGLAAFLWAMKNAKNFKGTLSALITSDEEGDAVWGTKYMLEILKDKNLIPDYAIVAEPTCEKVFGDAIKIGRRGSINGVLKKIGLQGHAAYPEKSINPIHKVAQVLHKIAGVDLDDGDEFFAPSKFVVTDIRAGMEVTNVTPGELKMMFNVRNNTHTDKEKIKNFIHEHFKDMNYTLELKQSAEPFVTNPDTKVVKALDRAIKNHTNITPQHSTAGGTSDARFFAKHGVKVVEFGVKNDTIHAPNERTTPEEVNKLADIFKEVIEEWN.

Position 64 (His64) interacts with Zn(2+). Asp66 is an active-site residue. Asp95 lines the Zn(2+) pocket. Residue Glu125 is the Proton acceptor of the active site. Residues Glu126, Glu154, and His339 each coordinate Zn(2+).

Belongs to the peptidase M20A family. DapE subfamily. Homodimer. Zn(2+) serves as cofactor. Requires Co(2+) as cofactor.

The enzyme catalyses N-succinyl-(2S,6S)-2,6-diaminopimelate + H2O = (2S,6S)-2,6-diaminopimelate + succinate. Its pathway is amino-acid biosynthesis; L-lysine biosynthesis via DAP pathway; LL-2,6-diaminopimelate from (S)-tetrahydrodipicolinate (succinylase route): step 3/3. Its function is as follows. Catalyzes the hydrolysis of N-succinyl-L,L-diaminopimelic acid (SDAP), forming succinate and LL-2,6-diaminopimelate (DAP), an intermediate involved in the bacterial biosynthesis of lysine and meso-diaminopimelic acid, an essential component of bacterial cell walls. This chain is Succinyl-diaminopimelate desuccinylase, found in Nautilia profundicola (strain ATCC BAA-1463 / DSM 18972 / AmH).